A 1500-amino-acid chain; its full sequence is Carbamoyl-phosphate synthase [ammonia], mitochondrial (1500 aa).

The transit peptide at 1–38 (MTRILTACKVVKTLKSGFGFANVTTKRQWDFSRPGIRL) directs the protein to the mitochondrion. An anthranilate phosphoribosyltransferase homolog region spans residues 39-218 (LSVKAKTAHI…VKVFGKGNPT (180 aa)). N6-acetyllysine; alternate occurs at positions 44, 55, 57, and 119. 4 positions are modified to N6-succinyllysine; alternate: Lys44, Lys55, Lys57, and Lys119. Lys55 is subject to N6-glutaryllysine; alternate. Ser148 is modified (phosphoserine). An N6-acetyllysine; alternate mark is found at Lys157 and Lys171. Lys157 bears the N6-succinyllysine; alternate mark. Residue Lys171 is modified to N6-glutaryllysine; alternate. Lys176 carries the N6-glutaryllysine modification. Lys182 is modified (N6-acetyllysine). Residue Ser189 is modified to Phosphoserine. Lys197 carries the post-translational modification N6-acetyllysine. Lys207, Lys210, Lys214, Lys219, and Lys228 each carry N6-acetyllysine; alternate. Lys207 is subject to N6-succinyllysine; alternate. 5 positions are modified to N6-glutaryllysine; alternate: Lys207, Lys210, Lys214, Lys219, and Lys228. The residue at position 214 (Lys214) is an N6-succinyllysine; alternate. Positions 219-404 (KVVAVDCGIK…FSLIKKGKGT (186 aa)) constitute a Glutamine amidotransferase type-1 domain. N6-glutaryllysine is present on Lys237. Lys279 bears the N6-acetyllysine mark. Lys280, Lys287, Lys307, and Lys310 each carry N6-acetyllysine; alternate. At Lys280 the chain carries N6-glutaryllysine; alternate. Lys287 and Lys307 each carry N6-succinyllysine; alternate. Residues Lys307 and Lys310 each carry the N6-glutaryllysine; alternate modification. Residue Lys400 is modified to N6-succinyllysine. Lys402 and Lys412 each carry N6-succinyllysine; alternate. An N6-glutaryllysine; alternate mark is found at Lys402, Lys412, Lys453, and Lys458. An N6-acetyllysine; alternate mark is found at Lys412, Lys453, Lys458, Lys522, Lys527, and Lys532. N6-succinyllysine; alternate occurs at positions 458, 522, and 527. 2 positions are modified to N6-glutaryllysine; alternate: Lys527 and Lys532. The residue at position 537 (Ser537) is a Phosphoserine; alternate. An O-linked (GlcNAc) serine; alternate glycan is attached at Ser537. Phosphoserine is present on Ser540. In terms of domain architecture, ATP-grasp 1 spans 551-743 (SDKLNEINEK…LAFIAAKIAL (193 aa)). 2 positions are modified to N6-acetyllysine; alternate: Lys553 and Lys560. 2 positions are modified to N6-succinyllysine; alternate: Lys553 and Lys560. Lys553 carries the post-translational modification N6-glutaryllysine; alternate. Ser569 bears the Phosphoserine mark. 3 positions are modified to N6-acetyllysine; alternate: Lys575, Lys603, and Lys612. Residues Lys575, Lys603, and Lys612 each carry the N6-succinyllysine; alternate modification. Residue Lys630 is modified to N6-acetyllysine. N6-glutaryllysine is present on Lys728. An N6-acetyllysine; alternate mark is found at Lys751, Lys757, Lys772, Lys793, Lys811, Lys831, Lys840, Lys841, Lys856, Lys875, Lys889, and Lys892. N6-succinyllysine; alternate is present on residues Lys751 and Lys757. N6-glutaryllysine; alternate is present on residues Lys757, Lys772, Lys793, and Lys811. Lys793 bears the N6-succinyllysine; alternate mark. An N6-succinyllysine; alternate mark is found at Lys831 and Lys840. 5 positions are modified to N6-glutaryllysine; alternate: Lys841, Lys856, Lys875, Lys889, and Lys892. Lys875, Lys889, and Lys892 each carry N6-succinyllysine; alternate. Residues Ser896 and Ser898 each carry the phosphoserine modification. Lys908, Lys915, and Lys919 each carry N6-acetyllysine; alternate. An N6-glutaryllysine; alternate mark is found at Lys908, Lys915, and Lys919. An N6-succinyllysine; alternate mark is found at Lys915 and Lys919. The residue at position 935 (Lys935) is an N6-acetyllysine. A Phosphoserine modification is found at Ser1036. Lys1074 carries the N6-acetyllysine; alternate modification. Lys1074 is subject to N6-succinyllysine; alternate. An N6-glutaryllysine; alternate modification is found at Lys1074. 3 positions are modified to phosphoserine: Ser1079, Ser1090, and Ser1093. An ATP-grasp 2 domain is found at 1093–1284 (SAVLDELKVA…FIDVATKVMI (192 aa)). At Lys1100 the chain carries N6-acetyllysine; alternate. Lys1100 is subject to N6-succinyllysine; alternate. Lys1149 is modified (N6-succinyllysine). Lys1168 and Lys1183 each carry N6-acetyllysine; alternate. Residues Lys1168 and Lys1183 each carry the N6-succinyllysine; alternate modification. Residues Lys1168 and Lys1183 each carry the N6-glutaryllysine; alternate modification. Ser1203 bears the Phosphoserine mark. The residue at position 1222 (Lys1222) is an N6-acetyllysine. Lys1224 is subject to N6-glutaryllysine. Lys1232, Lys1269, and Lys1291 each carry N6-acetyllysine; alternate. N6-succinyllysine; alternate occurs at positions 1232, 1269, and 1291. The O-linked (GlcNAc) serine glycan is linked to Ser1331. O-linked (GlcNAc) threonine glycosylation occurs at Thr1332. The 146-residue stretch at 1355 to 1500 (FKIPQKGILI…YRQYSAGKAA (146 aa)) folds into the MGS-like domain. Lys1356 carries the N6-acetyllysine; alternate modification. N6-succinyllysine; alternate is present on residues Lys1356 and Lys1360. N6-glutaryllysine; alternate is present on residues Lys1356 and Lys1360. N-acetyl-L-glutamate-binding residues include Thr1391, Thr1394, and Trp1410. Phosphoserine is present on residues Ser1419 and Ser1431. N-acetyl-L-glutamate-binding residues include Asn1437 and Asn1440. Lys1444 carries the post-translational modification N6-acetyllysine; alternate. Lys1444 carries the post-translational modification N6-succinyllysine; alternate. Asn1449 contributes to the N-acetyl-L-glutamate binding site. N6-acetyllysine; alternate occurs at positions 1471, 1479, and 1486. An N6-succinyllysine; alternate mark is found at Lys1471, Lys1479, and Lys1486. N6-glutaryllysine; alternate is present on residues Lys1479 and Lys1486.

Can form homooligomers (monomers as predominant form and dimers). As to quaternary structure, (Microbial infection) Interacts with P.berghei (ANKA strain) phospholipid scramblase PLSCR; the interaction is involved in the interaction between parasite sporozoites and host hepatocytes. Post-translationally, undergoes proteolytic cleavage in the C-terminal region corresponding to the loss of approximately 12 AA residues from the C-terminus. Acetylation of Lys-287, Lys-603, Lys-841 and Lys-1291 is observed in liver mitochondria from fasted mice but not from fed mice. In terms of processing, succinylated at Lys-44, Lys-287 and Lys-1291. Desuccinylated at Lys-1291 by SIRT5, leading to activation. Post-translationally, glutarylated. Glutarylation levels increase during fasting. Deglutarylated by SIRT5 at Lys-55, Lys-219, Lys-412, Lys-889, Lys-892, Lys-915, Lys-1360 and Lys-1486, leading to activation. In terms of tissue distribution, expressed in hepatocytes (at protein level).

The protein localises to the mitochondrion. Its subcellular location is the nucleus. The protein resides in the nucleolus. It is found in the cell membrane. The catalysed reaction is hydrogencarbonate + NH4(+) + 2 ATP = carbamoyl phosphate + 2 ADP + phosphate + 2 H(+). Its activity is regulated as follows. Requires N-acetyl-L-glutamate (NAG) as an allosteric activator. Involved in the urea cycle of ureotelic animals where the enzyme plays an important role in removing excess ammonia from the cell. This is Carbamoyl-phosphate synthase [ammonia], mitochondrial (Cps1) from Mus musculus (Mouse).